The chain runs to 101 residues: NADH-quinone oxidoreductase subunit K (101 aa).

A run of 3 helical transmembrane segments spans residues 2–22 (ISLNHYLIVAALMFVIGLVGV), 29–49 (IMLFFSTEILLNAANVALVAI), and 63–83 (MFIIAIAASEMAVGLGLLILW).

Belongs to the complex I subunit 4L family. As to quaternary structure, NDH-1 is composed of 14 different subunits. Subunits NuoA, H, J, K, L, M, N constitute the membrane sector of the complex.

It localises to the cell inner membrane. It carries out the reaction a quinone + NADH + 5 H(+)(in) = a quinol + NAD(+) + 4 H(+)(out). Its function is as follows. NDH-1 shuttles electrons from NADH, via FMN and iron-sulfur (Fe-S) centers, to quinones in the respiratory chain. The immediate electron acceptor for the enzyme in this species is believed to be ubiquinone. Couples the redox reaction to proton translocation (for every two electrons transferred, four hydrogen ions are translocated across the cytoplasmic membrane), and thus conserves the redox energy in a proton gradient. The protein is NADH-quinone oxidoreductase subunit K of Campylobacter hominis (strain ATCC BAA-381 / DSM 21671 / CCUG 45161 / LMG 19568 / NCTC 13146 / CH001A).